The primary structure comprises 1007 residues: Lysosomal alpha-mannosidase (1007 aa).

Positions methionine 1–alanine 47 are cleaved as a signal peptide. Disulfide bonds link cysteine 53/cysteine 356 and cysteine 266/cysteine 271. Zn(2+) contacts are provided by histidine 70 and aspartate 72. Asparagine 131 is a glycosylation site (N-linked (GlcNAc...) asparagine). Aspartate 194 contacts Zn(2+). The Nucleophile role is filled by aspartate 194. 3 N-linked (GlcNAc...) asparagine glycosylation sites follow: asparagine 308, asparagine 343, and asparagine 365. 2 disulfide bridges follow: cysteine 410-cysteine 470 and cysteine 491-cysteine 499. Residue histidine 444 participates in Zn(2+) binding. Residues asparagine 495, asparagine 540, asparagine 639, asparagine 686, asparagine 760, and asparagine 927 are each glycosylated (N-linked (GlcNAc...) asparagine).

The protein belongs to the glycosyl hydrolase 38 family. Zn(2+) serves as cofactor.

The protein localises to the lysosome. It catalyses the reaction Hydrolysis of terminal, non-reducing alpha-D-mannose residues in alpha-D-mannosides.. In terms of biological role, necessary for the catabolism of N-linked carbohydrates released during glycoprotein turnover. The protein is Lysosomal alpha-mannosidase (MAN2B1) of Cavia porcellus (Guinea pig).